A 295-amino-acid chain; its full sequence is Indole-3-glycerol phosphate synthase (295 aa).

Belongs to the TrpC family.

The catalysed reaction is 1-(2-carboxyphenylamino)-1-deoxy-D-ribulose 5-phosphate + H(+) = (1S,2R)-1-C-(indol-3-yl)glycerol 3-phosphate + CO2 + H2O. It participates in amino-acid biosynthesis; L-tryptophan biosynthesis; L-tryptophan from chorismate: step 4/5. The protein is Indole-3-glycerol phosphate synthase of Prochlorococcus marinus subsp. pastoris (strain CCMP1986 / NIES-2087 / MED4).